A 713-amino-acid chain; its full sequence is Probable muscarinic acetylcholine receptor gar-1 (713 aa).

Residues 1–20 lie on the Extracellular side of the membrane; that stretch reads MPNYTVPPDPADTSWDSPYS. The N-linked (GlcNAc...) asparagine glycan is linked to N3. Residues 21-41 form a helical membrane-spanning segment; it reads IPVQIVVWIIIIVLSLETIIG. Residues 42–66 lie on the Cytoplasmic side of the membrane; it reads NAMVVMAYRIERNISKQVSNRYIVS. A helical membrane pass occupies residues 67–87; that stretch reads LAISDLIIGIEGFPFFTVYVL. Residues 88–101 are Extracellular-facing; sequence NGDRWPLGWVACQT. C99 and C180 are disulfide-bonded. A helical membrane pass occupies residues 102–122; the sequence is WLFLDYTLCLVSILTVLLITA. At 123–144 the chain is on the cytoplasmic side; that stretch reads DRYLSVCHTAKYLKWQSPTKTQ. The helical transmembrane segment at 145-165 threads the bilayer; the sequence is LLIVMSWLLPAIIFGIMIYGW. The Extracellular segment spans residues 166 to 189; sequence QAMTGQSTSMSGAECSAPFLSNPY. A helical transmembrane segment spans residues 190–210; sequence VNMGMYVAYYWTTLVAMLILY. At 211–633 the chain is on the cytoplasmic side; that stretch reads KGIHQAAKNL…QTKAEKRAHK (423 aa). Disordered stretches follow at residues 256 to 350, 381 to 403, 427 to 475, and 515 to 585; these read KEKA…SRRC, SRYS…VEKA, KNTD…KQAE, and LIRR…TDTF. 2 stretches are compositionally biased toward polar residues: residues 266-275 and 287-315; these read SGYTSNQAGD and PETS…NDQN. Composition is skewed to basic and acidic residues over residues 320 to 333 and 393 to 403; these read EEER…RESN and HENDEKEVEKA. The span at 429 to 439 shows a compositional bias: low complexity; sequence TDSNNDSDTTS. A compositionally biased stretch (basic residues) spans 444-457; sequence RSRKYKKNKRPRSS. Residues 557–571 show a composition bias toward polar residues; the sequence is LTVNNENRGETSSQP. The chain crosses the membrane as a helical span at residues 634–656; sequence AFRTITFIVGFFAILWSPYYIMA. The Extracellular segment spans residues 657 to 670; the sequence is TVYGFCKGECIPSF. The helical transmembrane segment at 671–693 threads the bilayer; sequence LYTLSYYMCYLNSSGNPFAYALA. At 694 to 713 the chain is on the cytoplasmic side; that stretch reads NRQFRSAFMRMFRGNFNKVA.

Belongs to the G-protein coupled receptor 1 family. Muscarinic acetylcholine receptor subfamily. Expressed in head region of the larva. In adults, expression is seen in the periventricularis magnocellularis (PVM) neuron.

Its subcellular location is the cell membrane. In terms of biological role, the muscarinic acetylcholine receptor mediates various cellular responses, including inhibition of adenylate cyclase, breakdown of phosphoinositides and modulation of potassium channels through the action of G proteins. Primary transducing effect is Pi turnover. This is Probable muscarinic acetylcholine receptor gar-1 (gar-1) from Caenorhabditis elegans.